The chain runs to 423 residues: Protein FAM43A (423 aa).

Residues 263–283 show a composition bias toward acidic residues; it reads EQELQEEEEEEQPEGCPEEEE. Disordered stretches follow at residues 263 to 298, 321 to 344, and 382 to 423; these read EQEL…EAEA, RGEA…LLLG, and LSGD…PHSG. The segment covering 323–335 has biased composition (gly residues); the sequence is EALGGGGGSLGPG. Residues 383–393 show a composition bias toward low complexity; the sequence is SGDSTGSESSI. Over residues 401–411 the composition is skewed to polar residues; the sequence is TSATAGDSSRQ.

The protein belongs to the FAM43 family.

The protein is Protein FAM43A (FAM43A) of Homo sapiens (Human).